A 304-amino-acid chain; its full sequence is Non-specific ribonucleoside hydrolase RihC (304 aa).

Histidine 233 is an active-site residue.

It belongs to the IUNH family. RihC subfamily.

Hydrolyzes both purine and pyrimidine ribonucleosides with a broad-substrate specificity. The chain is Non-specific ribonucleoside hydrolase RihC from Shigella sonnei (strain Ss046).